Reading from the N-terminus, the 149-residue chain is Nucleoside diphosphate kinase (149 aa).

ATP is bound by residues K9, F57, R85, T91, R102, and N112. H115 (pros-phosphohistidine intermediate) is an active-site residue.

Belongs to the NDK family. Homotetramer. The cofactor is Mg(2+).

It localises to the cytoplasm. It catalyses the reaction a 2'-deoxyribonucleoside 5'-diphosphate + ATP = a 2'-deoxyribonucleoside 5'-triphosphate + ADP. The catalysed reaction is a ribonucleoside 5'-diphosphate + ATP = a ribonucleoside 5'-triphosphate + ADP. Functionally, major role in the synthesis of nucleoside triphosphates other than ATP. The ATP gamma phosphate is transferred to the NDP beta phosphate via a ping-pong mechanism, using a phosphorylated active-site intermediate. This chain is Nucleoside diphosphate kinase, found in Heliobacterium modesticaldum (strain ATCC 51547 / Ice1).